Here is a 370-residue protein sequence, read N- to C-terminus: Protein rough sheath 2 (370 aa).

HTH myb-type domains are found at residues 1 to 53 and 54 to 108; these read MKER…KNYL and RPGI…EKQQ. 2 consecutive DNA-binding regions (H-T-H motif) follow at residues 27–53 and 81–104; these read WHLVSQRMNVALDRDAKSCLERWKNYL and WKKIAAEVPGRTAKRLGKWWEVFK. The tract at residues 107–129 is disordered; that stretch reads QQRELRDSRRPPPEPSPDERGRY. The stretch at 276–340 forms a coiled coil; that stretch reads KRVEQQLEME…QVKEEKMAEQ (65 aa).

As to quaternary structure, homodimer. Interacts with AS2, WRKY1, HIRA, a probable histone chaperone, and RIK, a predicted RNA binding protein. In terms of tissue distribution, expressed in lateral organ promordia.

The protein localises to the nucleus. Its function is as follows. Transcription factor required for normal cell differentiation. Interacts directly with asymmetric leaves 2 (AS2) to repress the knox homeobox genes. The protein is Protein rough sheath 2 (RS2) of Zea mays (Maize).